The following is a 177-amino-acid chain: ATP synthase subunit b (177 aa).

Residues 16–36 (HLLLANMIVTIVVFLLLLILL) traverse the membrane as a helical segment.

This sequence belongs to the ATPase B chain family. In terms of assembly, F-type ATPases have 2 components, F(1) - the catalytic core - and F(0) - the membrane proton channel. F(1) has five subunits: alpha(3), beta(3), gamma(1), delta(1), epsilon(1). F(0) has three main subunits: a(1), b(2) and c(10-14). The alpha and beta chains form an alternating ring which encloses part of the gamma chain. F(1) is attached to F(0) by a central stalk formed by the gamma and epsilon chains, while a peripheral stalk is formed by the delta and b chains.

The protein localises to the cell membrane. F(1)F(0) ATP synthase produces ATP from ADP in the presence of a proton or sodium gradient. F-type ATPases consist of two structural domains, F(1) containing the extramembraneous catalytic core and F(0) containing the membrane proton channel, linked together by a central stalk and a peripheral stalk. During catalysis, ATP synthesis in the catalytic domain of F(1) is coupled via a rotary mechanism of the central stalk subunits to proton translocation. Its function is as follows. Component of the F(0) channel, it forms part of the peripheral stalk, linking F(1) to F(0). This Exiguobacterium sibiricum (strain DSM 17290 / CCUG 55495 / CIP 109462 / JCM 13490 / 255-15) protein is ATP synthase subunit b.